A 405-amino-acid chain; its full sequence is Probable tRNA sulfurtransferase (405 aa).

The 106-residue stretch at 60–165 folds into the THUMP domain; it reads EGVIERLRHV…QDAIYLTNQV (106 aa). Residues 183–184, 208–209, R265, G287, and Q296 each bind ATP; these read ML and HF.

The protein belongs to the ThiI family.

The protein resides in the cytoplasm. The enzyme catalyses [ThiI sulfur-carrier protein]-S-sulfanyl-L-cysteine + a uridine in tRNA + 2 reduced [2Fe-2S]-[ferredoxin] + ATP + H(+) = [ThiI sulfur-carrier protein]-L-cysteine + a 4-thiouridine in tRNA + 2 oxidized [2Fe-2S]-[ferredoxin] + AMP + diphosphate. The catalysed reaction is [ThiS sulfur-carrier protein]-C-terminal Gly-Gly-AMP + S-sulfanyl-L-cysteinyl-[cysteine desulfurase] + AH2 = [ThiS sulfur-carrier protein]-C-terminal-Gly-aminoethanethioate + L-cysteinyl-[cysteine desulfurase] + A + AMP + 2 H(+). It functions in the pathway cofactor biosynthesis; thiamine diphosphate biosynthesis. In terms of biological role, catalyzes the ATP-dependent transfer of a sulfur to tRNA to produce 4-thiouridine in position 8 of tRNAs, which functions as a near-UV photosensor. Also catalyzes the transfer of sulfur to the sulfur carrier protein ThiS, forming ThiS-thiocarboxylate. This is a step in the synthesis of thiazole, in the thiamine biosynthesis pathway. The sulfur is donated as persulfide by IscS. The protein is Probable tRNA sulfurtransferase of Latilactobacillus sakei subsp. sakei (strain 23K) (Lactobacillus sakei subsp. sakei).